The following is a 321-amino-acid chain: GTP cyclohydrolase FolE2 (321 aa).

This sequence belongs to the GTP cyclohydrolase IV family.

It catalyses the reaction GTP + H2O = 7,8-dihydroneopterin 3'-triphosphate + formate + H(+). It participates in cofactor biosynthesis; 7,8-dihydroneopterin triphosphate biosynthesis; 7,8-dihydroneopterin triphosphate from GTP: step 1/1. Functionally, converts GTP to 7,8-dihydroneopterin triphosphate. In Paracoccus denitrificans (strain Pd 1222), this protein is GTP cyclohydrolase FolE2.